A 187-amino-acid polypeptide reads, in one-letter code: Protein TIFY 3B (187 aa).

The span at 1–10 (MTKVKDEPRA) shows a compositional bias: basic and acidic residues. A disordered region spans residues 1 to 50 (MTKVKDEPRASVEGGCGVADGDGGAAEIGGTGSVEKSINEVRSTEIQTAE). The span at 14–32 (GGCGVADGDGGAAEIGGTG) shows a compositional bias: gly residues. The region spanning 51–86 (PTVPPNQLTIFFGGSVTVFDGLPSEKVQEILRIAAK) is the Tify domain. The Jas signature appears at 139–163 (PIARRHSLQRFLEKRRDRLVNKNPY). Positions 141-148 (ARRHSLQR) match the Nuclear localization signal motif. The segment at 152–187 (KRRDRLVNKNPYPTSDFKKTDVPTGNVSIKEEFPTA) is disordered.

It belongs to the TIFY/JAZ family. In terms of assembly, interacts with MYC2, AFPH2/NINJA, TIFY10A/JAZ1, TIFY10B/JAZ2, TIFY11A/JAZ5, TIFY11B/JAZ6, TIFY5A/JAZ8 and TIFY9/JAZ10. As to quaternary structure, (Microbial infection) Interacts with the pathogenic Pseudomonas syringae HopZ1a protein. In terms of processing, (Microbial infection) Acetylated by Pseudomonas syringae HopZ1a. Ubiquitinated. Targeted for degradation by the SCF(COI1) E3 ubiquitin ligase-proteasome pathway during jasmonate signaling.

It localises to the nucleus. In terms of biological role, repressor of jasmonate responses. The protein is Protein TIFY 3B of Arabidopsis thaliana (Mouse-ear cress).